The following is a 688-amino-acid chain: Polyribonucleotide nucleotidyltransferase (688 aa).

D484 and D490 together coordinate Mg(2+). Positions 550–609 (PTTEIFNVAPDKIVEIIGQGGRVIKEIVEKFEVKIDLNKPSGEVKIMGNKERVLKTKEFI) constitute a KH domain. Positions 626–688 (DEVLEAQVKR…NKGKIALDLA (63 aa)) constitute an S1 motif domain.

Belongs to the polyribonucleotide nucleotidyltransferase family. It depends on Mg(2+) as a cofactor.

The protein localises to the cytoplasm. The catalysed reaction is RNA(n+1) + phosphate = RNA(n) + a ribonucleoside 5'-diphosphate. Its function is as follows. Involved in mRNA degradation. Catalyzes the phosphorolysis of single-stranded polyribonucleotides processively in the 3'- to 5'-direction. In Helicobacter pylori (strain P12), this protein is Polyribonucleotide nucleotidyltransferase.